The primary structure comprises 184 residues: ATP synthase subunit delta (184 aa).

The protein belongs to the ATPase delta chain family. In terms of assembly, F-type ATPases have 2 components, F(1) - the catalytic core - and F(0) - the membrane proton channel. F(1) has five subunits: alpha(3), beta(3), gamma(1), delta(1), epsilon(1). F(0) has three main subunits: a(1), b(2) and c(10-14). The alpha and beta chains form an alternating ring which encloses part of the gamma chain. F(1) is attached to F(0) by a central stalk formed by the gamma and epsilon chains, while a peripheral stalk is formed by the delta and b chains.

Its subcellular location is the cell inner membrane. F(1)F(0) ATP synthase produces ATP from ADP in the presence of a proton or sodium gradient. F-type ATPases consist of two structural domains, F(1) containing the extramembraneous catalytic core and F(0) containing the membrane proton channel, linked together by a central stalk and a peripheral stalk. During catalysis, ATP synthesis in the catalytic domain of F(1) is coupled via a rotary mechanism of the central stalk subunits to proton translocation. Its function is as follows. This protein is part of the stalk that links CF(0) to CF(1). It either transmits conformational changes from CF(0) to CF(1) or is implicated in proton conduction. The protein is ATP synthase subunit delta of Rickettsia conorii (strain ATCC VR-613 / Malish 7).